Reading from the N-terminus, the 588-residue chain is uncharacterized protein (588 aa).

An N-terminal signal peptide occupies residues Met1–Ala19. 2 N-linked (GlcNAc...) asparagine glycosylation sites follow: Asn45 and Asn104. An FAD-binding PCMH-type domain is found at Gly118–Asp303. Position 156 is a pros-8alpha-FAD histidine (His156). Asn179, Asn312, Asn320, Asn351, Asn370, and Asn446 each carry an N-linked (GlcNAc...) asparagine glycan.

Belongs to the oxygen-dependent FAD-linked oxidoreductase family. FAD is required as a cofactor.

Its subcellular location is the secreted. This is an uncharacterized protein from Arthroderma benhamiae (strain ATCC MYA-4681 / CBS 112371) (Trichophyton mentagrophytes).